The chain runs to 381 residues: Diguanylate cyclase DosC (381 aa).

His-98 is a heme binding site. The GGDEF domain maps to Thr-325–Ser-381. Asp-333 is a Mg(2+) binding site. The substrate site is built by Asn-341 and Asp-350.

Requires heme as cofactor. The cofactor is Mg(2+).

It carries out the reaction 2 GTP = 3',3'-c-di-GMP + 2 diphosphate. It participates in purine metabolism; 3',5'-cyclic di-GMP biosynthesis. Its function is as follows. Globin-coupled heme-based oxygen sensor protein displaying diguanylate cyclase (DGC) activity in response to oxygen availability. Thus, catalyzes the synthesis of cyclic diguanylate (c-di-GMP) via the condensation of 2 GTP molecules. Cyclic-di-GMP is a second messenger which controls cell surface-associated traits in bacteria. In Shigella flexneri, this protein is Diguanylate cyclase DosC (dosC).